The following is a 213-amino-acid chain: FMN-dependent NADH:quinone oxidoreductase 1 (213 aa).

18–20 provides a ligand contact to FMN; that stretch reads SVS.

This sequence belongs to the azoreductase type 1 family. Homodimer. It depends on FMN as a cofactor.

It catalyses the reaction 2 a quinone + NADH + H(+) = 2 a 1,4-benzosemiquinone + NAD(+). The catalysed reaction is N,N-dimethyl-1,4-phenylenediamine + anthranilate + 2 NAD(+) = 2-(4-dimethylaminophenyl)diazenylbenzoate + 2 NADH + 2 H(+). Quinone reductase that provides resistance to thiol-specific stress caused by electrophilic quinones. Its function is as follows. Also exhibits azoreductase activity. Catalyzes the reductive cleavage of the azo bond in aromatic azo compounds to the corresponding amines. The protein is FMN-dependent NADH:quinone oxidoreductase 1 of Bacillus cereus (strain ATCC 10987 / NRS 248).